Consider the following 313-residue polypeptide: Ras-related GTP-binding protein A (313 aa).

10 residues coordinate GTP: Ser-16, Gly-17, Gly-19, Lys-20, Thr-21, Ser-22, Thr-36, Thr-42, Gly-65, and His-127. GDP-binding residues include Gly-17, Gly-19, Lys-20, Thr-21, and Ser-22. GDP contacts are provided by His-127 and Asp-130. Lys-142 participates in a covalent cross-link: Glycyl lysine isopeptide (Lys-Gly) (interchain with G-Cter in ubiquitin). Residues Leu-148 and Ile-164 each coordinate GDP. Ile-164 contacts GTP. Residues Lys-220, Lys-230, and Lys-244 each participate in a glycyl lysine isopeptide (Lys-Gly) (interchain with G-Cter in ubiquitin) cross-link. Ser-309 is modified (phosphoserine).

This sequence belongs to the GTR/RAG GTP-binding protein family. Can occur as a homodimer or as a heterodimer with RRAGC or RRAGD in a sequence-independent manner; heterodimerization stabilizes proteins of the heterodimer. The GTP-bound form of RRAGA (in complex with the GDP-bound form of RRAGC or RRAGD) interacts with RPTOR, thereby promoting recruitment of mTORC1 to the lysosomes. The Rag heterodimer interacts with SLC38A9; the probable amino acid sensor. The Rag heterodimer interacts with the Ragulator complex. The GTP-bound form of RRAGA interacts with NOL8. Component of the lysosomal folliculin complex (LFC), composed of FLCN, FNIP1 (or FNIP2), RagA/RRAGA or RagB/RRAGB GDP-bound, RagC/RRAGC or RagD/RRAGD GTP-bound, and Ragulator. Interacts with SH3BP4; the interaction with this negative regulator is most probably direct, preferentially occurs with the inactive GDP-bound form of RRAGA and is negatively regulated by amino acids. Interacts (polyubiquitinated) with TSC2. Interacts with SESN1, SESN2 and SESN3. Interacts with PIP4P1. Interacts with GPR137B. Interacts with WDR83; this interaction regulates the spatiotemporal localization of mTORC1 to the lysosomal surface. Post-translationally, polybiquitinated via 'Lys-63'-linked polyubiquitination by RNF152 in response to amino acid starvation: polyubiquitination of the GDP-bound inactive form by RNF152 promotes RRAGA inactivation and interaction with the GATOR1 complex. This does not affect RRAGA degradation.

It localises to the cytoplasm. The protein resides in the nucleus. It is found in the lysosome membrane. It catalyses the reaction GTP + H2O = GDP + phosphate + H(+). Its activity is regulated as follows. The activation of GTP-binding proteins is generally mediated by a guanine exchange factor (GEF), while inactivation through hydrolysis of bound GTP is catalyzed by a GTPase activating protein (GAP). The Ragulator complex functions as a GEF and promotes the active GTP-bound form. The GATOR1 complex functions as a GAP and stimulates RRAGA GTPase activity to turn it into its inactive GDP-bound form, preventing mTORC1 recruitment and activation. Its function is as follows. Guanine nucleotide-binding protein that plays a crucial role in the cellular response to amino acid availability through regulation of the mTORC1 signaling cascade. Forms heterodimeric Rag complexes with RagC/RRAGC or RagD/RRAGD and cycles between an inactive GDP-bound and an active GTP-bound form: RagA/RRAGA is in its active form when GTP-bound RagA/RRAGA forms a complex with GDP-bound RagC/RRAGC (or RagD/RRAGD) and in an inactive form when GDP-bound RagA/RRAGA heterodimerizes with GTP-bound RagC/RRAGC (or RagD/RRAGD). In its GTP-bound active form, promotes the recruitment of mTORC1 to the lysosomes and its subsequent activation by the GTPase RHEB. Involved in the RCC1/Ran-GTPase pathway. May play a direct role in a TNF-alpha signaling pathway leading to induction of cell death. This is Ras-related GTP-binding protein A from Bos taurus (Bovine).